We begin with the raw amino-acid sequence, 378 residues long: Heme chaperone HemW (378 aa).

The region spanning 1 to 237 is the Radical SAM core domain; sequence MVKLPPLSLY…LTAAGYQQYE (237 aa). S-adenosyl-L-methionine is bound at residue Y10. [4Fe-4S] cluster contacts are provided by C16, C20, and C23. S-adenosyl-L-methionine-binding positions include G66, 67-68, E99, Q126, R138, and D163; that span reads GT.

Belongs to the anaerobic coproporphyrinogen-III oxidase family. HemW subfamily. In terms of assembly, binding of the [4Fe-4S] cofactor promotes dimerization. The cofactor is [4Fe-4S] cluster.

It localises to the cytoplasm. Its function is as follows. Probably acts as a heme chaperone, transferring heme to the NarI subunit of the respiratory enzyme nitrate reductase; transfer may be stimulated by NADH. Binds one molecule of heme per monomer, possibly covalently. Heme binding is not affected by either [4Fe-4S] or S-adenosyl-L-methionine (SAM)-binding. Does not have coproporphyrinogen III dehydrogenase activity in vitro. Binds 1 [4Fe-4S] cluster. The cluster is coordinated with 3 cysteines and an exchangeable S-adenosyl-L-methionine. This Escherichia coli (strain K12) protein is Heme chaperone HemW.